A 280-amino-acid polypeptide reads, in one-letter code: Probable endonuclease 4 (280 aa).

Residues His-69, His-109, Glu-145, Asp-179, His-182, His-216, Asp-229, His-231, and Glu-261 each contribute to the Zn(2+) site.

This sequence belongs to the AP endonuclease 2 family. Zn(2+) is required as a cofactor.

The catalysed reaction is Endonucleolytic cleavage to 5'-phosphooligonucleotide end-products.. Its function is as follows. Endonuclease IV plays a role in DNA repair. It cleaves phosphodiester bonds at apurinic or apyrimidinic (AP) sites, generating a 3'-hydroxyl group and a 5'-terminal sugar phosphate. The protein is Probable endonuclease 4 of Actinobacillus pleuropneumoniae serotype 5b (strain L20).